The following is a 1557-amino-acid chain: Ras guanine nucleotide exchange factor K (1557 aa).

Pro residues predominate over residues 1–16 (MEPTINPPVNLPPPVP). Disordered regions lie at residues 1–121 (MEPT…SYTV), 146–181 (VETL…KLSV), 195–238 (LYQQ…SPQL), 283–347 (SPLP…GLTP), 558–619 (NNNN…DELS), and 881–937 (TNNN…QVNH). 7 stretches are compositionally biased toward low complexity: residues 17–40 (SRSN…NNTN), 52–63 (SSPSSPSSPSPS), 73–90 (NNNN…NGNV), 102–114 (ISSP…HTSS), 148–161 (TLSS…KTTT), 195–207 (LYQQ…NPNS), and 222–236 (PPSS…STSP). Residues 283-310 (SPLPPPPLTIPNKVPPLPMRLPPPPPPQ) are compositionally biased toward pro residues. 2 coiled-coil regions span residues 310–338 (QQLD…SNST) and 591–629 (NNNN…EEEL). The segment covering 311-333 (QLDQMYSNNNQQQQQQQQQQQNN) has biased composition (low complexity). The span at 334-343 (ESNSTTTSEG) shows a compositional bias: polar residues. Composition is skewed to low complexity over residues 558–610 (NNNN…NNNN) and 881–928 (TNNN…TPTT). Residues 1058-1177 (LNAEIDAATL…QIRNCILKRT (120 aa)) enclose the N-terminal Ras-GEF domain. The segment at 1254-1303 (PSISQNTPSSPSLIPSSPRPITSSSSVSSSTLLKSPLSQQAKSRIPETKT) is disordered. Residues 1261 to 1291 (PSSPSLIPSSPRPITSSSSVSSSTLLKSPLS) show a composition bias toward low complexity. One can recognise a Ras-GEF domain in the interval 1316-1549 (DDEEIARQLT…YHLSLLKEPR (234 aa)).

Promotes the exchange of Ras-bound GDP by GTP. The sequence is that of Ras guanine nucleotide exchange factor K (gefK) from Dictyostelium discoideum (Social amoeba).